The chain runs to 220 residues: Iron-sulfur flavoprotein AF_1436 (220 aa).

Residues Cys-47, Cys-50, Cys-53, and Cys-59 each coordinate [4Fe-4S] cluster.

The protein belongs to the SsuE family. Isf subfamily. As to quaternary structure, homodimer. The cofactor is FMN. [4Fe-4S] cluster serves as cofactor.

Its function is as follows. Redox-active protein probably involved in electron transport. This is Iron-sulfur flavoprotein AF_1436 from Archaeoglobus fulgidus (strain ATCC 49558 / DSM 4304 / JCM 9628 / NBRC 100126 / VC-16).